Here is a 177-residue protein sequence, read N- to C-terminus: ATP synthase subunit delta (177 aa).

The protein belongs to the ATPase delta chain family. F-type ATPases have 2 components, F(1) - the catalytic core - and F(0) - the membrane proton channel. F(1) has five subunits: alpha(3), beta(3), gamma(1), delta(1), epsilon(1). F(0) has three main subunits: a(1), b(2) and c(10-14). The alpha and beta chains form an alternating ring which encloses part of the gamma chain. F(1) is attached to F(0) by a central stalk formed by the gamma and epsilon chains, while a peripheral stalk is formed by the delta and b chains.

It is found in the cell inner membrane. Functionally, f(1)F(0) ATP synthase produces ATP from ADP in the presence of a proton or sodium gradient. F-type ATPases consist of two structural domains, F(1) containing the extramembraneous catalytic core and F(0) containing the membrane proton channel, linked together by a central stalk and a peripheral stalk. During catalysis, ATP synthesis in the catalytic domain of F(1) is coupled via a rotary mechanism of the central stalk subunits to proton translocation. Its function is as follows. This protein is part of the stalk that links CF(0) to CF(1). It either transmits conformational changes from CF(0) to CF(1) or is implicated in proton conduction. The polypeptide is ATP synthase subunit delta (Neisseria meningitidis serogroup A / serotype 4A (strain DSM 15465 / Z2491)).